The primary structure comprises 452 residues: UPF0210 protein Ccel_1722 (452 aa).

Belongs to the UPF0210 family. In terms of assembly, homodimer.

The polypeptide is UPF0210 protein Ccel_1722 (Ruminiclostridium cellulolyticum (strain ATCC 35319 / DSM 5812 / JCM 6584 / H10) (Clostridium cellulolyticum)).